Consider the following 169-residue polypeptide: Nicotinamide-nucleotide adenylyltransferase (169 aa).

Belongs to the archaeal NMN adenylyltransferase family.

It is found in the cytoplasm. The catalysed reaction is beta-nicotinamide D-ribonucleotide + ATP + H(+) = diphosphate + NAD(+). It participates in cofactor biosynthesis; NAD(+) biosynthesis; NAD(+) from nicotinamide D-ribonucleotide: step 1/1. The protein is Nicotinamide-nucleotide adenylyltransferase of Picrophilus torridus (strain ATCC 700027 / DSM 9790 / JCM 10055 / NBRC 100828 / KAW 2/3).